A 202-amino-acid chain; its full sequence is Peptidyl-tRNA hydrolase (202 aa).

A tRNA-binding site is contributed by tyrosine 17. Histidine 22 acts as the Proton acceptor in catalysis. Residues phenylalanine 76, asparagine 78, and asparagine 124 each contribute to the tRNA site.

The protein belongs to the PTH family. In terms of assembly, monomer.

It is found in the cytoplasm. It catalyses the reaction an N-acyl-L-alpha-aminoacyl-tRNA + H2O = an N-acyl-L-amino acid + a tRNA + H(+). Functionally, hydrolyzes ribosome-free peptidyl-tRNAs (with 1 or more amino acids incorporated), which drop off the ribosome during protein synthesis, or as a result of ribosome stalling. In terms of biological role, catalyzes the release of premature peptidyl moieties from peptidyl-tRNA molecules trapped in stalled 50S ribosomal subunits, and thus maintains levels of free tRNAs and 50S ribosomes. The protein is Peptidyl-tRNA hydrolase of Nitratidesulfovibrio vulgaris (strain DSM 19637 / Miyazaki F) (Desulfovibrio vulgaris).